We begin with the raw amino-acid sequence, 275 residues long: Echotoxin-2 (275 aa).

An N-terminal signal peptide occupies residues methionine 1–serine 23. Residues serine 23–leucine 32 are plays an important role in the hemolytic activity. The interval glutamate 49 to serine 67 is N-terminal region. Phosphocholine contacts are provided by glycine 123, serine 141, proline 143, tyrosine 176, and tyrosine 177. A trp-rich region, which is important for the binding to lipid membrane region spans residues serine 141 to glycine 156. Positions arginine 249–lysine 275 are excised as a propeptide.

The protein belongs to the actinoporin family. Sea anemone subfamily. In terms of assembly, octamer or nonamer in membranes. Monomer in the soluble state. Salivary gland.

It is found in the secreted. Its subcellular location is the nematocyst. It localises to the target cell membrane. Its function is as follows. Pore-forming protein that forms cations-selective hydrophilic pores of around 1 nm and causes cardiac stimulation and cytolysis. Pore formation is a multi-step process that involves specific recognition of membrane sphingomyelin (but neither cholesterol nor phosphatidylcholine) using aromatic rich region and adjacent phosphocholine (POC) binding site, firm binding to the membrane (mainly driven by hydrophobic interactions) accompanied by the transfer of the N-terminal region to the lipid-water interface and finally pore formation after oligomerization of monomers. Exhibits both hemolytic and lethal activities. Gangliosides potently inhibits the hemolytic activity. This chain is Echotoxin-2, found in Monoplex parthenopeus (Giant triton).